The sequence spans 252 residues: 3-dehydroquinate dehydratase (252 aa).

3-dehydroquinate-binding positions include Ser21, 46 to 48 (EWR), and Arg82. His143 (proton donor/acceptor) is an active-site residue. Lys170 (schiff-base intermediate with substrate) is an active-site residue. 3-dehydroquinate is bound by residues Arg213, Ser232, and Gln236.

The protein belongs to the type-I 3-dehydroquinase family. In terms of assembly, dimer of dimers.

It carries out the reaction 3-dehydroquinate = 3-dehydroshikimate + H2O. It functions in the pathway metabolic intermediate biosynthesis; chorismate biosynthesis; chorismate from D-erythrose 4-phosphate and phosphoenolpyruvate: step 3/7. Its activity is regulated as follows. Inhibited by (2R)-2-methyl-3-dehydroquinic acid. Functionally, involved in the third step of the chorismate pathway, which leads to the biosynthesis of aromatic amino acids. Catalyzes the cis-dehydration of 3-dehydroquinate (DHQ) and introduces the first double bond of the aromatic ring to yield 3-dehydroshikimate. The reaction involves the formation of an imine intermediate between the keto group of 3-dehydroquinate and the epsilon-amino group of Lys-170 at the active site. The sequence is that of 3-dehydroquinate dehydratase from Salmonella typhi.